We begin with the raw amino-acid sequence, 152 residues long: Endoribonuclease YbeY (152 aa).

Positions 118, 122, and 128 each coordinate Zn(2+).

The protein belongs to the endoribonuclease YbeY family. It depends on Zn(2+) as a cofactor.

The protein resides in the cytoplasm. Single strand-specific metallo-endoribonuclease involved in late-stage 70S ribosome quality control and in maturation of the 3' terminus of the 16S rRNA. This chain is Endoribonuclease YbeY, found in Lacticaseibacillus casei (strain BL23) (Lactobacillus casei).